The primary structure comprises 563 residues: Serine carboxypeptidase S10 family member 2 (563 aa).

The N-terminal stretch at 1 to 23 (MNIKIILLSIILIIQLLLLNNNG) is a signal peptide. Residues 24–529 (GIVESKINFS…VPLTLGAWIG (506 aa)) lie on the Extracellular side of the membrane. N-linked (GlcNAc...) asparagine glycosylation is found at Asn-31, Asn-95, Asn-110, and Asn-213. Ser-225 is an active-site residue. 3 N-linked (GlcNAc...) asparagine glycosylation sites follow: Asn-244, Asn-328, and Asn-382. Asp-417 is an active-site residue. Asn-468 carries N-linked (GlcNAc...) asparagine glycosylation. His-479 is an active-site residue. Asn-499 is a glycosylation site (N-linked (GlcNAc...) asparagine). The helical transmembrane segment at 530–550 (ITVGGCAFGFLVGGLIIYIIM) threads the bilayer. The Cytoplasmic portion of the chain corresponds to 551–563 (KKSSKNGYYKVIQ).

Belongs to the peptidase S10 family.

The protein resides in the membrane. In terms of biological role, probable carboxypeptidase. This is Serine carboxypeptidase S10 family member 2 from Dictyostelium discoideum (Social amoeba).